Reading from the N-terminus, the 217-residue chain is Cytokinin riboside 5'-monophosphate phosphoribohydrolase LOG7 (217 aa).

Substrate is bound by residues E79, 97-98 (RK), 114-120 (GYGTLEE), and T126.

This sequence belongs to the LOG family. In terms of tissue distribution, expressed in roots and shoots. Detected in the epidermis of the root elongation zone, cotyledon and leaves, in trichomes and pollen.

It localises to the cytoplasm. The protein localises to the nucleus. The catalysed reaction is N(6)-(dimethylallyl)adenosine 5'-phosphate + H2O = N(6)-dimethylallyladenine + D-ribose 5-phosphate. It carries out the reaction 9-ribosyl-trans-zeatin 5'-phosphate + H2O = trans-zeatin + D-ribose 5-phosphate. In terms of biological role, cytokinin-activating enzyme working in the direct activation pathway. Phosphoribohydrolase that converts inactive cytokinin nucleotides to the biologically active free-base forms. This is Cytokinin riboside 5'-monophosphate phosphoribohydrolase LOG7 (LOG7) from Arabidopsis thaliana (Mouse-ear cress).